We begin with the raw amino-acid sequence, 79 residues long: Sec-independent protein translocase protein TatA (79 aa).

A helical membrane pass occupies residues 1-21 (MGGFTSIWHWVIVLLVIVLLF). A disordered region spans residues 48-79 (EEEAKNEPKTLDAQATQTKVHESSEIKSKQES). Residues 66 to 79 (KVHESSEIKSKQES) show a composition bias toward basic and acidic residues.

The protein belongs to the TatA/E family. In terms of assembly, the Tat system comprises two distinct complexes: a TatABC complex, containing multiple copies of TatA, TatB and TatC subunits, and a separate TatA complex, containing only TatA subunits. Substrates initially bind to the TatABC complex, which probably triggers association of the separate TatA complex to form the active translocon.

Its subcellular location is the cell inner membrane. In terms of biological role, part of the twin-arginine translocation (Tat) system that transports large folded proteins containing a characteristic twin-arginine motif in their signal peptide across membranes. TatA could form the protein-conducting channel of the Tat system. The protein is Sec-independent protein translocase protein TatA of Helicobacter pylori (strain ATCC 700392 / 26695) (Campylobacter pylori).